The primary structure comprises 358 residues: WD repeat-containing protein 53 (358 aa).

WD repeat units follow at residues 8 to 46 (GHSSPILCLNASQEGLVASGAEGGDLVVWGEDGTLLGHT), 92 to 131 (VNEEEINCLSLNETENLLASADDSGTIKILDLENKKISRS), 134 to 174 (RHSN…PLWI), 195 to 234 (LNPALAHSVSVASCGNVFSCGAEDGKVRIFRVMGVKCEQE), and 239 to 278 (GHSLGVSQVCFLRESYLLLTGGNDGKIKLWDVSSEIEKKH). Over residues 278 to 294 (HKSPTKHTHRKKTKRAA) the composition is skewed to basic residues. A disordered region spans residues 278–309 (HKSPTKHTHRKKTKRAAYTKQGGGTHASVTGE).

It belongs to the WD repeat WDR53 family.

The sequence is that of WD repeat-containing protein 53 (WDR53) from Bos taurus (Bovine).